The following is an 847-amino-acid chain: Leucine--tRNA ligase (847 aa).

The 'HIGH' region signature appears at 41 to 51 (PYPSGRIHMGH). The 'KMSKS' region signature appears at 619 to 623 (KMSKS). Residue Lys-622 coordinates ATP.

Belongs to the class-I aminoacyl-tRNA synthetase family.

The protein localises to the cytoplasm. The enzyme catalyses tRNA(Leu) + L-leucine + ATP = L-leucyl-tRNA(Leu) + AMP + diphosphate. This chain is Leucine--tRNA ligase, found in Cereibacter sphaeroides (strain ATCC 17023 / DSM 158 / JCM 6121 / CCUG 31486 / LMG 2827 / NBRC 12203 / NCIMB 8253 / ATH 2.4.1.) (Rhodobacter sphaeroides).